The primary structure comprises 1008 residues: Probable transport protein MmpL10 (1008 aa).

Helical transmembrane passes span 23–43 (WPWV…MTVP), 202–222 (IELV…RNPI), 225–245 (LLPL…VSGV), 257–277 (MIVL…VFLI), 301–321 (ALIS…ITFL), 340–360 (IGIA…LVLA), 389–409 (VAYL…ASLV), 835–855 (DLQL…MALL), 862–882 (IYLV…CVLV), 895–915 (VPGL…MLLA), 940–960 (VITA…LSSI), and 961–981 (ATVV…TFIV).

This sequence belongs to the resistance-nodulation-cell division (RND) (TC 2.A.6) family. MmpL subfamily.

It localises to the cell membrane. The sequence is that of Probable transport protein MmpL10 (mmpL10) from Mycobacterium leprae (strain TN).